The chain runs to 361 residues: MSDIERLEQEIFLALEAACDEQELEAVRVAALGKKGSISERLKALGNISADERLKVGPALNELKKRILELLAQKRDIFKRQATALRLSKERVDVTLPVRSSPVERGRIHPISQVIDELIAIYADMGFSIAEGPDIETDYYNFTALNFPEGHPAREMHDTFFFSEDATGNRKVLRTHTSPVQIRVMEKKQAPIRIIIPGKTYRMDSDATHSPMFHQVEGLVIDKTSNIAHMMWLHETFCKAFFEVPSVKMRFRPSFFPFTEPSMEVDIQCDRSGSEVKFGEGHDWLEILGCGMVHPQVLKNVGFDPDEYQGFAWGMGIDRIAMLKYGMPDLRAFFDADLRWLDHYGFRCFDISTLFSRLGNV.

Position 260 (glutamate 260) interacts with Mg(2+).

The protein belongs to the class-II aminoacyl-tRNA synthetase family. Phe-tRNA synthetase alpha subunit type 1 subfamily. As to quaternary structure, tetramer of two alpha and two beta subunits. It depends on Mg(2+) as a cofactor.

Its subcellular location is the cytoplasm. The enzyme catalyses tRNA(Phe) + L-phenylalanine + ATP = L-phenylalanyl-tRNA(Phe) + AMP + diphosphate + H(+). In Bartonella bacilliformis (strain ATCC 35685 / KC583 / Herrer 020/F12,63), this protein is Phenylalanine--tRNA ligase alpha subunit.